The sequence spans 106 residues: MERRVWFLSRSARSLAAMFSCTYSRATHRHSGKTVVRSSGTRCTRQPRLCRVTRSTLVATSPRRRSLVQQRRPPLREQNGGSGSSCVSSGGSASTVKTPGSRRASK.

The segment at Arg54–Lys106 is disordered. Low complexity predominate over residues Ser84–Ser94.

This is an uncharacterized protein from Human adenovirus C serotype 2 (HAdV-2).